We begin with the raw amino-acid sequence, 316 residues long: Retinol dehydrogenase 12 (316 aa).

Position 46 to 52 (46 to 52 (GANTGIG)) interacts with NADP(+). S175 lines the substrate pocket. Y200 functions as the Proton acceptor in the catalytic mechanism.

It belongs to the short-chain dehydrogenases/reductases (SDR) family. Expressed in the retina.

It carries out the reaction all-trans-retinol + NADP(+) = all-trans-retinal + NADPH + H(+). The catalysed reaction is 11-cis-retinol + NADP(+) = 11-cis-retinal + NADPH + H(+). It catalyses the reaction 9-cis-retinol + NADP(+) = 9-cis-retinal + NADPH + H(+). The enzyme catalyses a 4-hydroxynonen-1-ol + NADP(+) = a 4-hydroxynonenal + NADPH + H(+). It carries out the reaction (E)-non-2-en-1-ol + NADP(+) = (E)-non-2-enal + NADPH + H(+). The catalysed reaction is (Z)-non-6-en-1-ol + NADP(+) = (Z)-non-6-enal + NADPH + H(+). It catalyses the reaction nonan-1-ol + NADP(+) = nonanal + NADPH + H(+). It participates in cofactor metabolism; retinol metabolism. In terms of biological role, retinoids dehydrogenase/reductase with a clear preference for NADP. Displays high activity towards 9-cis, 11-cis and all-trans-retinal. Shows very weak activity towards 13-cis-retinol. Also exhibits activity, albeit with lower affinity than for retinaldehydes, towards lipid peroxidation products (C9 aldehydes) such as 4-hydroxynonenal and trans-2-nonenal. May play an important function in photoreceptor cells to detoxify 4-hydroxynonenal and potentially other toxic aldehyde products resulting from lipid peroxidation. Has no dehydrogenase activity towards steroids. This Bos taurus (Bovine) protein is Retinol dehydrogenase 12 (RDH12).